We begin with the raw amino-acid sequence, 1483 residues long: Chromosome partition protein MukB (1483 aa).

34 to 41 (GGNGAGKS) contributes to the ATP binding site. Coiled-coil stretches lie at residues 326–418 (LEAD…QYNQ), 444–480 (LETFQAKELEATEKMLSLEQKMSMAQTAHSQFEQAYQ), 509–601 (RHLA…MQRA), 780–804 (RAACESRIESLHAEREVLSERFATL), 837–923 (EIRQ…AKLE), 977–1115 (EMLS…TAKA), and 1209–1265 (VEAI…LQNV). The tract at residues 666–783 (PGGSEDQRLN…EVPLFGRAAC (118 aa)) is flexible hinge.

It belongs to the SMC family. MukB subfamily. In terms of assembly, homodimerization via its hinge domain. Binds to DNA via its C-terminal region. Interacts, and probably forms a ternary complex, with MukE and MukF via its C-terminal region. The complex formation is stimulated by calcium or magnesium. Interacts with tubulin-related protein FtsZ.

It localises to the cytoplasm. The protein localises to the nucleoid. Functionally, plays a central role in chromosome condensation, segregation and cell cycle progression. Functions as a homodimer, which is essential for chromosome partition. Involved in negative DNA supercoiling in vivo, and by this means organize and compact chromosomes. May achieve or facilitate chromosome segregation by condensation DNA from both sides of a centrally located replisome during cell division. The polypeptide is Chromosome partition protein MukB (Shigella dysenteriae serotype 1 (strain Sd197)).